Consider the following 91-residue polypeptide: Probable Fe(2+)-trafficking protein (91 aa).

The protein belongs to the Fe(2+)-trafficking protein family.

Functionally, could be a mediator in iron transactions between iron acquisition and iron-requiring processes, such as synthesis and/or repair of Fe-S clusters in biosynthetic enzymes. This is Probable Fe(2+)-trafficking protein from Burkholderia cenocepacia (strain ATCC BAA-245 / DSM 16553 / LMG 16656 / NCTC 13227 / J2315 / CF5610) (Burkholderia cepacia (strain J2315)).